The chain runs to 301 residues: GLABROUS1 enhancer-binding protein-like 2 (301 aa).

Residues 1–62 (MATPTELGFS…NTKMASPPSN (62 aa)) are disordered. The span at 44 to 54 (KKKKKKTKHNT) shows a compositional bias: basic residues. The tract at residues 268–289 (LSNEWKALCVEELKLNINKLRF) is non-canonical leucine-zipper.

The protein belongs to the GeBP family. Homo- and heterodimers. Interacts with GEBP, GPL1 and GPL3. In terms of tissue distribution, expressed in the apical meristem and young leaf primordia. Detected in the vascular tissues of cotyledons and leaves, in hydathodes and in the septun of siliques, but not in roots.

It is found in the nucleus. Its function is as follows. Probable transcription factor. May play redundant roles with GEBP and GPL1 in cytokinin responses by regulating the transcript levels of type-A ARR response genes. Involved in stress responses. Plays a repressive role in cell expansion by counteracting the positive role of CPR5 in this process, but does not regulate cell proliferation or endoreduplication. The sequence is that of GLABROUS1 enhancer-binding protein-like 2 from Arabidopsis thaliana (Mouse-ear cress).